The following is a 303-amino-acid chain: Phytochrome-associated serine/threonine-protein phosphatase 3 (303 aa).

Residues Asp50, His52, Asp78, and Asn110 each contribute to the Zn(2+) site. His111 functions as the Proton donor in the catalytic mechanism. The Zn(2+) site is built by His160 and His234.

Belongs to the PPP phosphatase family. PP-6 (PP-V) subfamily. In terms of assembly, interacts with PHYA and PHYB, mostly when they are phosphorylated and in Pfr forms. Interacts with TAP46. Interacts with NRP. Interacts with PIN1 and PIN2. Interacts with ABI5. Interacts with PIF3 and PIF4. Protein phosphatase 6 (PP6) holoenzyme is a heterotrimeric complex formed by the catalytic subunit FYPP, a SAPS domain-containing subunit (SAL) and a protein phosphatase 2A regulatory subunit A (PP2AA). The cofactor is Zn(2+). In terms of tissue distribution, mostly expressed in flowers. Also detected to a lower extent in stems and leaves. Expressed in roots.

The protein resides in the cytoplasm. The catalysed reaction is O-phospho-L-seryl-[protein] + H2O = L-seryl-[protein] + phosphate. It carries out the reaction O-phospho-L-threonyl-[protein] + H2O = L-threonyl-[protein] + phosphate. Catalytic subunit of protein phosphatase 6 (PP6). Dephosphorylates phosphorylated phytochromes, with a preference toward Pfr forms. Plays a major role in the photoperiodic control of flowering time in long days by modulating phytochrome signals in flowering time control. Involved in the regulation of polar auxin transport in roots. Dephosphorylates directly the auxin efflux carriers PIN1 and PIN2, thus promoting their proper polar localization in root cell plasma membrane. Acts antagonistically with the protein kinase PID to regulate the reversible phosphorylation of PIN and polar targeting, subsequently impacting polar auxin transport and plant development. Involved in the regulation of abscisic acid (ABA) signaling during seed germination and postgermination seedling growth. Functions as a negative regulator of ABA signaling through direct dephosphorylation and destabilization of ABI5 protein. Acts antagonistically with the protein kinase SRK2E/SNRK2.6 to regulate ABI5 phosphorylation and ABA responses. Involved in the regulation of phosphorylation status in hypocotyl phototropism. Involved in the negative regulation of photomorphogenesis by controlling the stability and transcriptional activity of PIF3 and PIF4 proteins in the dark, via the regulation of their phosphorylation status. In Arabidopsis thaliana (Mouse-ear cress), this protein is Phytochrome-associated serine/threonine-protein phosphatase 3.